The following is a 288-amino-acid chain: Bifunctional protein FolD 1 (288 aa).

NADP(+) is bound by residues 170-172 (GPG) and I236.

It belongs to the tetrahydrofolate dehydrogenase/cyclohydrolase family. As to quaternary structure, homodimer.

It catalyses the reaction (6R)-5,10-methylene-5,6,7,8-tetrahydrofolate + NADP(+) = (6R)-5,10-methenyltetrahydrofolate + NADPH. It carries out the reaction (6R)-5,10-methenyltetrahydrofolate + H2O = (6R)-10-formyltetrahydrofolate + H(+). It functions in the pathway one-carbon metabolism; tetrahydrofolate interconversion. In terms of biological role, catalyzes the oxidation of 5,10-methylenetetrahydrofolate to 5,10-methenyltetrahydrofolate and then the hydrolysis of 5,10-methenyltetrahydrofolate to 10-formyltetrahydrofolate. The chain is Bifunctional protein FolD 1 from Deinococcus geothermalis (strain DSM 11300 / CIP 105573 / AG-3a).